Here is an 89-residue protein sequence, read N- to C-terminus: uncharacterized protein (89 aa).

Composition is skewed to basic residues over residues 1 to 17 (MPPHGHHHHHHGHHGHH) and 65 to 89 (HHGHHHHHGHHGHHDHHHHGHHGHH). Disordered regions lie at residues 1 to 25 (MPPHGHHHHHHGHHGHHEHITITPV) and 60 to 89 (LETGHHHGHHHHHGHHGHHDHHHHGHHGHH).

This is an uncharacterized protein from Dictyostelium discoideum (Social amoeba).